A 612-amino-acid chain; its full sequence is UvrABC system protein C (612 aa).

One can recognise a GIY-YIG domain in the interval 18–96 (TRPGVYRMMD…IKTLKPPYNI (79 aa)). The 36-residue stretch at 208–243 (PEIINETIQQMEVASAQLDFERAAVLRDQVDYLRRV) folds into the UVR domain.

Belongs to the UvrC family. In terms of assembly, interacts with UvrB in an incision complex.

It is found in the cytoplasm. Its function is as follows. The UvrABC repair system catalyzes the recognition and processing of DNA lesions. UvrC both incises the 5' and 3' sides of the lesion. The N-terminal half is responsible for the 3' incision and the C-terminal half is responsible for the 5' incision. This Hahella chejuensis (strain KCTC 2396) protein is UvrABC system protein C.